The following is a 346-amino-acid chain: Phosphate acyltransferase (346 aa).

It belongs to the PlsX family. As to quaternary structure, homodimer. Probably interacts with PlsY.

Its subcellular location is the cytoplasm. It catalyses the reaction a fatty acyl-[ACP] + phosphate = an acyl phosphate + holo-[ACP]. It participates in lipid metabolism; phospholipid metabolism. Its function is as follows. Catalyzes the reversible formation of acyl-phosphate (acyl-PO(4)) from acyl-[acyl-carrier-protein] (acyl-ACP). This enzyme utilizes acyl-ACP as fatty acyl donor, but not acyl-CoA. The polypeptide is Phosphate acyltransferase (Brucella suis biovar 1 (strain 1330)).